We begin with the raw amino-acid sequence, 123 residues long: Small ribosomal subunit protein uS12 (123 aa).

Positions 1 to 21 are disordered; sequence MPTIEQLVRKGRQAKPKKSKT. The span at 9–20 shows a compositional bias: basic residues; the sequence is RKGRQAKPKKSK.

Belongs to the universal ribosomal protein uS12 family. Part of the 30S ribosomal subunit. Contacts proteins S8 and S17. May interact with IF1 in the 30S initiation complex.

In terms of biological role, with S4 and S5 plays an important role in translational accuracy. Its function is as follows. Interacts with and stabilizes bases of the 16S rRNA that are involved in tRNA selection in the A site and with the mRNA backbone. Located at the interface of the 30S and 50S subunits, it traverses the body of the 30S subunit contacting proteins on the other side and probably holding the rRNA structure together. The combined cluster of proteins S8, S12 and S17 appears to hold together the shoulder and platform of the 30S subunit. This chain is Small ribosomal subunit protein uS12, found in Bifidobacterium longum (strain NCC 2705).